The primary structure comprises 321 residues: Nucleotide-binding protein LI0459 (321 aa).

Position 41–48 (41–48) interacts with ATP; that stretch reads GMSGAGKS.

It belongs to the RapZ-like family.

In terms of biological role, displays ATPase and GTPase activities. The chain is Nucleotide-binding protein LI0459 from Lawsonia intracellularis (strain PHE/MN1-00).